The following is a 419-amino-acid chain: Serine--tRNA ligase (419 aa).

L-serine is bound at residue 226–228 (TSE). ATP contacts are provided by residues 257-259 (RRE) and Val273. Residue Glu280 participates in L-serine binding. Position 344–347 (344–347 (ELTS)) interacts with ATP. L-serine is bound at residue Thr379.

The protein belongs to the class-II aminoacyl-tRNA synthetase family. Type-1 seryl-tRNA synthetase subfamily. In terms of assembly, homodimer. The tRNA molecule binds across the dimer.

The protein localises to the cytoplasm. It catalyses the reaction tRNA(Ser) + L-serine + ATP = L-seryl-tRNA(Ser) + AMP + diphosphate + H(+). It carries out the reaction tRNA(Sec) + L-serine + ATP = L-seryl-tRNA(Sec) + AMP + diphosphate + H(+). Its pathway is aminoacyl-tRNA biosynthesis; selenocysteinyl-tRNA(Sec) biosynthesis; L-seryl-tRNA(Sec) from L-serine and tRNA(Sec): step 1/1. Catalyzes the attachment of serine to tRNA(Ser). Is also able to aminoacylate tRNA(Sec) with serine, to form the misacylated tRNA L-seryl-tRNA(Sec), which will be further converted into selenocysteinyl-tRNA(Sec). The sequence is that of Serine--tRNA ligase from Corynebacterium efficiens (strain DSM 44549 / YS-314 / AJ 12310 / JCM 11189 / NBRC 100395).